We begin with the raw amino-acid sequence, 42 residues long: DRDSCVDKSRCAKYGYYQECQDCCKKAGHSGGTCMFFKCKCA.

Disulfide bonds link cysteine 5–cysteine 23, cysteine 11–cysteine 34, cysteine 20–cysteine 39, and cysteine 24–cysteine 41.

Belongs to the ergtoxin family. Gamma-KTx 1 subfamily. In terms of tissue distribution, expressed by the venom gland.

It localises to the secreted. Its function is as follows. Blocks Kv11/ERG potassium channels. The chain is Potassium channel toxin gamma-KTx 1.6 from Centruroides exilicauda (Bark scorpion).